Here is a 194-residue protein sequence, read N- to C-terminus: Rho-related protein racC (194 aa).

The GTP site is built by alanine 17, glycine 19, lysine 20, threonine 21, cysteine 22, glutamate 34, tyrosine 36, threonine 39, glycine 64, lysine 120, aspartate 122, alanine 163, and lysine 164. Threonine 21 is a binding site for Mg(2+). 2 consecutive short sequence motifs (switch) follow at residues 30-41 (RKFPEDYIPTVF) and 61-79 (DTAGQEEYDQLRPLSYSSA). Threonine 39 contacts Mg(2+). Cysteine methyl ester is present on cysteine 191. Cysteine 191 is lipidated: S-geranylgeranyl cysteine. A propeptide spans 192 to 194 (ALL) (removed in mature form).

The protein belongs to the small GTPase superfamily. Rho family. Interacts (GTP-bound form) with PAK4 (via CRIB domain). Interacts (GTP-bound form) with PAK5 (via CRIB domain). Mg(2+) serves as cofactor.

The protein localises to the cell membrane. It localises to the cytoplasm. Its subcellular location is the cytoskeleton. It catalyses the reaction GTP + H2O = GDP + phosphate + H(+). Its activity is regulated as follows. Regulated by guanine nucleotide exchange factors (GEFs) which promote the exchange of bound GDP for free GTP, GTPase activating proteins (GAPs) which increase the GTP hydrolysis activity, and GDP dissociation inhibitors which inhibit the dissociation of the nucleotide from the GTPase. Its function is as follows. Small GTPase which cycles between active GTP-bound and inactive GDP-bound states. In Entamoeba histolytica (strain ATCC 30459 / HM-1:IMSS / ABRM), this protein is Rho-related protein racC.